The following is a 438-amino-acid chain: LIM domain-containing protein C4F6.12 (438 aa).

Disordered stretches follow at residues 1-37 (MHSP…NNLV) and 49-78 (TGGR…TIKQ). The span at 24–37 (SPVSTNGSPLNNLV) shows a compositional bias: polar residues. 2 positions are modified to phosphoserine: Ser-67 and Ser-96. LIM zinc-binding domains lie at 256 to 316 (KSCH…QFSP), 318 to 375 (CKHC…NKYA), and 376 to 435 (VKCK…SVKF).

In Schizosaccharomyces pombe (strain 972 / ATCC 24843) (Fission yeast), this protein is LIM domain-containing protein C4F6.12.